The primary structure comprises 333 residues: Nucleoid-associated protein APJL_0454 (333 aa).

Belongs to the YejK family.

The protein resides in the cytoplasm. It localises to the nucleoid. The protein is Nucleoid-associated protein APJL_0454 of Actinobacillus pleuropneumoniae serotype 3 (strain JL03).